The following is a 147-amino-acid chain: Endoribonuclease YbeY (147 aa).

3 residues coordinate Zn(2+): histidine 108, histidine 112, and histidine 118.

This sequence belongs to the endoribonuclease YbeY family. The cofactor is Zn(2+).

It localises to the cytoplasm. In terms of biological role, single strand-specific metallo-endoribonuclease involved in late-stage 70S ribosome quality control and in maturation of the 3' terminus of the 16S rRNA. This is Endoribonuclease YbeY from Sulfurovum sp. (strain NBC37-1).